The primary structure comprises 167 residues: Small ribosomal subunit protein uS9 (167 aa).

2 disordered regions span residues 1 to 45 (MSEY…GGAT) and 137 to 167 (KAGF…FSKR). Acidic residues predominate over residues 9–19 (DTVEDITESDE). Residues 20–36 (FTGTYTSESSTPATGGN) are compositionally biased toward polar residues. A compositionally biased stretch (basic and acidic residues) spans 143 to 152 (RDPRATERKK). Basic residues predominate over residues 153–167 (AGLKKARKAPQFSKR).

This sequence belongs to the universal ribosomal protein uS9 family.

The polypeptide is Small ribosomal subunit protein uS9 (Kineococcus radiotolerans (strain ATCC BAA-149 / DSM 14245 / SRS30216)).